The sequence spans 198 residues: Recombination protein RecR (198 aa).

A C4-type zinc finger spans residues 57-72 (CDKCNTFTEAQICEVC). The region spanning 80–175 (TLLCVVETPA…AVTRLARGVP (96 aa)) is the Toprim domain.

It belongs to the RecR family.

Its function is as follows. May play a role in DNA repair. It seems to be involved in an RecBC-independent recombinational process of DNA repair. It may act with RecF and RecO. The chain is Recombination protein RecR from Burkholderia multivorans (strain ATCC 17616 / 249).